The primary structure comprises 352 residues: Ribosomal RNA large subunit methyltransferase M (352 aa).

Residues S184, 217–220 (APGG), D236, D256, and D272 contribute to the S-adenosyl-L-methionine site. The active-site Proton acceptor is the K301.

The protein belongs to the class I-like SAM-binding methyltransferase superfamily. RNA methyltransferase RlmE family. RlmM subfamily. Monomer.

It is found in the cytoplasm. The enzyme catalyses cytidine(2498) in 23S rRNA + S-adenosyl-L-methionine = 2'-O-methylcytidine(2498) in 23S rRNA + S-adenosyl-L-homocysteine + H(+). Functionally, catalyzes the 2'-O-methylation at nucleotide C2498 in 23S rRNA. The polypeptide is Ribosomal RNA large subunit methyltransferase M (Pseudomonas aeruginosa (strain LESB58)).